Reading from the N-terminus, the 149-residue chain is Large ribosomal subunit protein bL9 (149 aa).

It belongs to the bacterial ribosomal protein bL9 family.

In terms of biological role, binds to the 23S rRNA. In Mannheimia succiniciproducens (strain KCTC 0769BP / MBEL55E), this protein is Large ribosomal subunit protein bL9.